A 528-amino-acid chain; its full sequence is GMP synthase [glutamine-hydrolyzing] (528 aa).

The Glutamine amidotransferase type-1 domain occupies 13–204 (AIVILDFGSQ…VNHICGCEQD (192 aa)). Cys-90 functions as the Nucleophile in the catalytic mechanism. Residues His-178 and Glu-180 contribute to the active site. One can recognise a GMPS ATP-PPase domain in the interval 205–403 (WTTNAFIDEA…LGLPEEIVRR (199 aa)). 232 to 238 (SGGVDSS) provides a ligand contact to ATP.

In terms of assembly, homodimer.

It catalyses the reaction XMP + L-glutamine + ATP + H2O = GMP + L-glutamate + AMP + diphosphate + 2 H(+). The protein operates within purine metabolism; GMP biosynthesis; GMP from XMP (L-Gln route): step 1/1. In terms of biological role, catalyzes the synthesis of GMP from XMP. This Synechococcus sp. (strain CC9902) protein is GMP synthase [glutamine-hydrolyzing].